A 126-amino-acid chain; its full sequence is Large ribosomal subunit protein bL12 (126 aa).

Positions 104-116 (AKKEDAEKAKAQL) are enriched in basic and acidic residues. A disordered region spans residues 104-126 (AKKEDAEKAKAQLEEAGATVELK). Positions 117 to 126 (EEAGATVELK) are enriched in low complexity.

It belongs to the bacterial ribosomal protein bL12 family. As to quaternary structure, homodimer. Part of the ribosomal stalk of the 50S ribosomal subunit. Forms a multimeric L10(L12)X complex, where L10 forms an elongated spine to which 2 to 4 L12 dimers bind in a sequential fashion. Binds GTP-bound translation factors.

Functionally, forms part of the ribosomal stalk which helps the ribosome interact with GTP-bound translation factors. Is thus essential for accurate translation. This is Large ribosomal subunit protein bL12 from Bifidobacterium animalis subsp. lactis (strain AD011).